The chain runs to 341 residues: 4-hydroxythreonine-4-phosphate dehydrogenase (341 aa).

Threonine 126 provides a ligand contact to substrate. A divalent metal cation-binding residues include histidine 161, histidine 206, and histidine 272. 3 residues coordinate substrate: lysine 280, asparagine 289, and arginine 298.

This sequence belongs to the PdxA family. As to quaternary structure, homodimer. A divalent metal cation is required as a cofactor.

It is found in the cytoplasm. It catalyses the reaction 4-(phosphooxy)-L-threonine + NAD(+) = 3-amino-2-oxopropyl phosphate + CO2 + NADH. It functions in the pathway cofactor biosynthesis; pyridoxine 5'-phosphate biosynthesis; pyridoxine 5'-phosphate from D-erythrose 4-phosphate: step 4/5. Functionally, catalyzes the NAD(P)-dependent oxidation of 4-(phosphooxy)-L-threonine (HTP) into 2-amino-3-oxo-4-(phosphooxy)butyric acid which spontaneously decarboxylates to form 3-amino-2-oxopropyl phosphate (AHAP). The protein is 4-hydroxythreonine-4-phosphate dehydrogenase of Thermosynechococcus vestitus (strain NIES-2133 / IAM M-273 / BP-1).